Reading from the N-terminus, the 901-residue chain is Inner capsid protein VP3 (901 aa).

This sequence belongs to the turreted BTV-fold inner capsid family. In terms of assembly, homodecamer; each decamer is made up of two conformers of VP2, called VP2A and VP2B. 12 homodecamers assemble to form an icosahedral capsid.

The protein resides in the virion. In terms of biological role, inner capsid protein that self-assembles to form an icosahedral capsid with a T=2 symmetry, which consists of 120 copies of VP2, with channels at each of its five-fold vertices. This capsid constitutes the innermost concentric layer of the viral mature particle. In Bluetongue virus 13 (isolate USA) (BTV 13), this protein is Inner capsid protein VP3 (Segment-3).